Reading from the N-terminus, the 675-residue chain is Regulator of G-protein signaling 9 (675 aa).

The DEP domain occupies 30–105 (PETGVRMHNQ…PDSSLYRFQT (76 aa)). In terms of domain architecture, G protein gamma spans 222–283 (VRKEIMYYQQ…DTQFWDLNAK (62 aa)). The region spanning 299 to 414 (NFSELIRDPK…LKSPIYKEML (116 aa)) is the RGS domain. Disordered regions lie at residues 524-571 (RVAL…PPKA) and 637-662 (DSGTCLMDSDDPRAGESGDQTTEKEV). Polar residues predominate over residues 542 to 551 (SGANSGPSVT). Basic and acidic residues-rich tracts occupy residues 552-562 (ENREPSADHSR) and 646-662 (DDPRAGESGDQTTEKEV).

Heterodimer with GNB5. Interacts with RGS7BP, leading to regulate the subcellular location of the heterodimer formed with GNB5. Component of the RGS9-1-Gbeta5 complex composed of RGS9 (RGS9-1), Gbeta5 (GNB5) and RGS9BP. Interacts with PDE6G and GNAT1. In terms of processing, retinal isoform 1 is light-dependent phosphorylated at 'Ser-475'. Phosphorylation is decreased by light exposition. Interaction with RGS9BP is decreased when isoform 1 is phosphorylated at 'Ser-475'. As to expression, isoform 1 is expressed in photoreceptor outer segments. Isoform 2 is expressed in brain striatum.

It is found in the membrane. In terms of biological role, inhibits signal transduction by increasing the GTPase activity of G protein alpha subunits thereby driving them into their inactive GDP-bound form. Binds to GNAT1. Involved in phototransduction; key element in the recovery phase of visual transduction. This chain is Regulator of G-protein signaling 9 (Rgs9), found in Mus musculus (Mouse).